We begin with the raw amino-acid sequence, 385 residues long: Photoreceptor ankyrin repeat protein (385 aa).

ANK repeat units lie at residues 17-46, 53-83, 87-116, 122-151, and 156-190; these read CNLK…SPEE, NGRT…DVNQ, DGNT…GLDL, RGLT…DLSS, and RGKT…QLSL. A disordered region spans residues 270–385; it reads LGTRGKSVPE…GGLGQAGGSK (116 aa). Residues 284–297 show a composition bias toward pro residues; the sequence is APPPPPEPHPPQQV. A compositionally biased stretch (polar residues) spans 304–326; that stretch reads APNQSPQSMFSQWLQSRDSTRSQ. Over residues 361–373 the composition is skewed to basic and acidic residues; sequence FQERKKKEEETEP. The span at 374-385 shows a compositional bias: gly residues; that stretch reads RGGGLGQAGGSK.

Isoform 1: Expressed predominantly in the retina. Isoform 2: Expressed in the pineal gland.

The protein localises to the cytoplasm. It is found in the cytosol. Its subcellular location is the nucleus. In terms of biological role, acts as a transcriptional repressor for CRX-activated photoreceptor gene regulation. In Mus musculus (Mouse), this protein is Photoreceptor ankyrin repeat protein.